The chain runs to 194 residues: uncharacterized protein (194 aa).

Residues 17–37 (DVWLYLLVFGCLSVLVLVLVH) form a helical membrane-spanning segment.

Belongs to the IIV-6 307L family.

The protein localises to the membrane. This is an uncharacterized protein from Invertebrate iridescent virus 3 (IIV-3).